A 234-amino-acid polypeptide reads, in one-letter code: Mannose/glucose-specific lectin Cramoll (234 aa).

Residues Glu8 and Asp10 each coordinate Mn(2+). Positions 10, 12, 14, and 19 each coordinate Ca(2+). A carbohydrate is bound at residue Tyr12. Residues Asp19, His24, and Ser34 each contribute to the Mn(2+) site. Position 99-100 (99-100 (LY)) interacts with a carbohydrate. Asp205 is a binding site for Ca(2+). Residue Arg225 coordinates a carbohydrate.

It belongs to the leguminous lectin family. Homotetramer. Post-translationally, the alpha and beta chains are produced by partial proteolytic processing of the lectin precursor by an asparaginyl endopeptidase.

In terms of biological role, glucose/D-mannose specific lectin. This Cratylia mollis (Camaratu bean) protein is Mannose/glucose-specific lectin Cramoll.